A 152-amino-acid chain; its full sequence is UPF0266 membrane protein YobD (152 aa).

Helical transmembrane passes span 6–26 (LVLI…QFIM), 45–65 (VDSV…VTSH), and 67–87 (AQMT…IFWI).

The protein belongs to the UPF0266 family.

The protein localises to the cell inner membrane. The chain is UPF0266 membrane protein YobD from Salmonella paratyphi B (strain ATCC BAA-1250 / SPB7).